Reading from the N-terminus, the 102-residue chain is Putative pterin-4-alpha-carbinolamine dehydratase (102 aa).

It belongs to the pterin-4-alpha-carbinolamine dehydratase family.

The catalysed reaction is (4aS,6R)-4a-hydroxy-L-erythro-5,6,7,8-tetrahydrobiopterin = (6R)-L-erythro-6,7-dihydrobiopterin + H2O. The protein is Putative pterin-4-alpha-carbinolamine dehydratase of Burkholderia orbicola (strain MC0-3).